Reading from the N-terminus, the 567-residue chain is NAC domain-containing protein 78 (567 aa).

The region spanning 9 to 159 is the NAC domain; the sequence is LAPGFRFHPT…AYVLCRIFQK (151 aa). The DNA-binding element occupies 108–165; that stretch reads VGMKKTLVYHKGRAPRGERTNWVMHEYRLSDEDLKKAGVPQEAYVLCRIFQKSGTGPK. The tract at residues 393 to 436 is disordered; that stretch reads NQEALDQKPAPKELEKEVAGGKEAVEEKESGEGSSSKQDTDFKD. A compositionally biased stretch (basic and acidic residues) spans 397 to 423; it reads LDQKPAPKELEKEVAGGKEAVEEKESG. Residues 544–564 form a helical membrane-spanning segment; the sequence is LVFMCLWVLLLSVSFKIVTMV.

As to expression, expressed in root meristem. Expressed in roots, rosette leaves, cauline leaves, shoot apex, stems and flowers.

The protein resides in the membrane. The protein localises to the nucleus. Functionally, transcriptional activator activated by proteolytic cleavage through regulated intramembrane proteolysis (RIP). Transcripition activator associated with the induction of genes related to flavonoid biosynthesis and required for the accumulation of anthocyanins in response to high light stress. Plays a role in the regulation of 20S and 26S proteasomes in response to high light stress. The polypeptide is NAC domain-containing protein 78 (NAC078) (Arabidopsis thaliana (Mouse-ear cress)).